Reading from the N-terminus, the 541-residue chain is Circadian clock oscillator protein KaiC (541 aa).

Residues 1 to 40 (MNQSLGPSEPEKPQDNTAEDSTEPTPDNHRADLSELRGIP) form a disordered region. 2 consecutive KaiC domains span residues 21-268 (STEP…INIF) and 282-541 (VRVS…EEGL). Residues 26 to 35 (PDNHRADLSE) are compositionally biased toward basic and acidic residues. ATP contacts are provided by Gly-70, Thr-71, Gly-72, Lys-73, Thr-74, Leu-75, Ser-110, Lys-245, Leu-246, Arg-247, Thr-249, His-251, Thr-261, Thr-311, Gly-312, Thr-313, Gly-314, Lys-315, and Thr-316. Thr-74 contributes to the Mg(2+) binding site. Thr-316 and Glu-339 together coordinate Mg(2+). Residue Trp-352 coordinates ATP. Position 452 is a phosphoserine; by autocatalysis (Ser-452). Thr-453 is subject to Phosphothreonine; by autocatalysis. ATP contacts are provided by Arg-472, Lys-478, Met-479, Arg-480, Ser-482, His-484, and Lys-486.

Belongs to the KaiC family. As to quaternary structure, homohexamer; hexamerization is dependent on ATP-binding. The KaiABC complex composition changes during the circadian cycle to control KaiC phosphorylation. Complexes KaiC(6), KaiA(2-4):KaiC(6), KaiB(6):KaiC(6) and KaiC(6):KaiB(6):KaiA(12) are among the most important forms, many form cooperatively. KaiC interacts with SasA, activating its autokinase function and leading to RpaA activation. The cofactor is Mg(2+). In terms of processing, phosphorylated on serine and threonine residues by autocatalysis. Has a 4 step phosphorylation cycle; the autokinase acts first on Thr-453, then Ser-452. When Ser-452 is modified KaiC switches to an autophosphatase mode, acting first on phospho-Thr-453 then phospho-Ser-452.

It carries out the reaction L-seryl-[protein] + ATP = O-phospho-L-seryl-[protein] + ADP + H(+). The enzyme catalyses L-threonyl-[protein] + ATP = O-phospho-L-threonyl-[protein] + ADP + H(+). The catalysed reaction is ATP + H2O = ADP + phosphate + H(+). Its activity is regulated as follows. The interaction with KaiA enhances its phosphorylation status, while the interaction with KaiB decreases it. In terms of biological role, central component of the KaiABC oscillator complex, which constitutes the main circadian regulator in cyanobacteria. Complex composition changes during the circadian cycle to control KaiC phosphorylation. KaiA stimulates KaiC autophosphorylation, while KaiB sequesters KaiA, leading to KaiC autodephosphorylation. Clock output pathways impact the RpaA transcriptional regulator. KaiC enhances the autophosphorylation activity of SasA, which then transfers its phosphate group to RpaA to activate it. KaiB and KaiC together enhance the phospho-RpaA dephosphatase activity of CikA. Functionally, has a weak, temperature-independent ATPase activity; ATPase activity defines the circadian period. The phosphorylation state of KaiC modulates its ATPase activity and effects KaiB binding. The protein is Circadian clock oscillator protein KaiC of Parathermosynechococcus lividus (Thermostichus lividus).